We begin with the raw amino-acid sequence, 142 residues long: Large ribosomal subunit protein uL11 (142 aa).

It belongs to the universal ribosomal protein uL11 family. Part of the ribosomal stalk of the 50S ribosomal subunit. Interacts with L10 and the large rRNA to form the base of the stalk. L10 forms an elongated spine to which L12 dimers bind in a sequential fashion forming a multimeric L10(L12)X complex. Post-translationally, one or more lysine residues are methylated.

In terms of biological role, forms part of the ribosomal stalk which helps the ribosome interact with GTP-bound translation factors. This Vibrio cholerae serotype O1 (strain ATCC 39541 / Classical Ogawa 395 / O395) protein is Large ribosomal subunit protein uL11.